The sequence spans 1522 residues: DNA topoisomerase 2-binding protein 1 (1522 aa).

BRCT domains follow at residues 101 to 189 (VYNM…RYTD) and 195 to 284 (FKCP…IYKT). A Phosphothreonine modification is found at T298. S301 is modified (phosphoserine). 3 BRCT domains span residues 354–444 (APED…PYIH), 548–633 (TEEG…SNPL), and 641–738 (TGMT…HFLI). An interaction with CIP2A region spans residues 756 to 891 (INLNSDTAEH…AVALSASPQL (136 aa)). T779 and T848 each carry phosphothreonine. The Nuclear localization signal motif lies at 852 to 858 (PSQQKRK). S860 carries the phosphoserine modification. Residue T861 is modified to Phosphothreonine. Phosphoserine occurs at positions 864, 886, and 888. Residues 900–991 (EAPKPLHKVV…KHLPESLYPH (92 aa)) enclose the BRCT 6 domain. S1002 is subject to Phosphoserine. The segment at 1018–1058 (VSSTKDDEPDPLILEENDVDNMATNNKESAPSNGSGKNDSK) is disordered. The span at 1024–1036 (DEPDPLILEENDV) shows a compositional bias: acidic residues. Residues 1039–1058 (MATNNKESAPSNGSGKNDSK) show a composition bias toward polar residues. A phosphothreonine mark is found at T1062 and T1064. Over residues 1083-1114 (SIVKPQGQRTSLSRSGCNSASSTPDSTRSARS) the composition is skewed to polar residues. The tract at residues 1083-1118 (SIVKPQGQRTSLSRSGCNSASSTPDSTRSARSGRSR) is disordered. BRCT domains follow at residues 1259-1351 (ETHE…DYEW) and 1389-1486 (IVEG…NYCL). The segment at 1501 to 1522 (TGLSQKRKAPTEKNKIKRPRVH) is disordered. S1504 carries the post-translational modification Phosphoserine. Residues 1517–1520 (KRPR) carry the Nuclear localization signal motif.

Belongs to the TOPBP1 family. As to quaternary structure, interacts (via BRCT domains 1 and 2) with (phosphorylated) MDC1; promoting TOPBP1 recruitment to DNA damage sites during mitosis. Interacts (via BRCT domains 7 and 8) with (autophosphorylated) ATR; promoting activation of ATR. Interacts (via BRCT domains 7 and 8) with (phosphorylated) POLQ; specifically binds POLQ phosphorylated by PLK1, promoting POLQ recruitment to DNA damage sites. Interacts (via BRCT domains 1 and 2) with (phosphorylated) RAD9A. Interacts (via BRCT domain 2) with (phosphorylated) TP53BP1. Interacts (via BRCT domain 2) with (phosphorylated) HTATSF1. Interacts (via BRCT domains 7 and 8) with (phosphorylated) RAD51; promoting RAD51 recruitment to damaged chromatin. Interacts with CIP2A; forming the CIP2A-TOPBP1 complex. Interacts with POLE. Interacts with UBR5. Interacts with E2F1. Interacts with PML. Interacts with SMARCA2. Interacts with SMARCA4. Interacts with RHNO1. May interact with TOP2B. Interacts with TICRR. Interacts with HELB. Interacts (via residues 1233-1522) with RECQL4. In terms of processing, phosphorylated on serine and threonine residues in response to X-ray irradiation. Ubiquitinated and degraded by the proteasome. X-ray irradiation reduces ubiquitination. Deubiquitinated by USP13; leading to TOPBP1 stabilizion and activation of the ATR-TOPBP1 axis pathway. As to expression, highly expressed in heart, brain, placenta, lung and kidney.

The protein localises to the nucleus. Its subcellular location is the chromosome. The protein resides in the cytoplasm. It localises to the cytoskeleton. It is found in the microtubule organizing center. The protein localises to the centrosome. Its subcellular location is the spindle pole. Its function is as follows. Scaffold protein that acts as a key protein-protein adapter in DNA replication and DNA repair. Composed of multiple BRCT domains, which specifically recognize and bind phosphorylated proteins, bringing proteins together into functional combinations. Required for DNA replication initiation but not for the formation of pre-replicative complexes or the elongation stages. Necessary for the loading of replication factors onto chromatin, including GMNC, CDC45, DNA polymerases and components of the GINS complex. Plays a central role in DNA repair by bridging proteins and promoting recruitment of proteins to DNA damage sites. Involved in double-strand break (DSB) repair via homologous recombination in S-phase by promoting the exchange between the DNA replication factor A (RPA) complex and RAD51. Mechanistically, TOPBP1 is recruited to DNA damage sites in S-phase via interaction with phosphorylated HTATSF1, and promotes the loading of RAD51, thereby facilitating RAD51 nucleofilaments formation and RPA displacement, followed by homologous recombination. Involved in microhomology-mediated end-joining (MMEJ) DNA repair by promoting recruitment of polymerase theta (POLQ) to DNA damage sites during mitosis. MMEJ is an alternative non-homologous end-joining (NHEJ) machinery that takes place during mitosis to repair DSBs in DNA that originate in S-phase. Recognizes and binds POLQ phosphorylated by PLK1, enabling its recruitment to DSBs for subsequent repair. Involved in G1 DNA damage checkpoint by acting as a molecular adapter that couples TP53BP1 and the 9-1-1 complex. In response to DNA damage, triggers the recruitment of checkpoint signaling proteins on chromatin, which activate the CHEK1 signaling pathway and block S-phase progression. Acts as an activator of the kinase activity of ATR. Also required for chromosomal stability when DSBs occur during mitosis by forming filamentous assemblies that bridge MDC1 and tether broken chromosomes during mitosis. Together with CIP2A, plays an essential role in the response to genome instability generated by the presence of acentric chromosome fragments derived from shattered chromosomes within micronuclei. Micronuclei, which are frequently found in cancer cells, consist of chromatin surrounded by their own nuclear membrane: following breakdown of the micronuclear envelope, a process associated with chromothripsis, the CIP2A-TOPBP1 complex tethers chromosome fragments during mitosis to ensure clustered segregation of the fragments to a single daughter cell nucleus, facilitating re-ligation with limited chromosome scattering and loss. Recruits the SWI/SNF chromatin remodeling complex to E2F1-responsive promoters, thereby down-regulating E2F1 activity and inhibiting E2F1-dependent apoptosis during G1/S transition and after DNA damage. This is DNA topoisomerase 2-binding protein 1 from Homo sapiens (Human).